The primary structure comprises 550 residues: Arginine--tRNA ligase (550 aa).

Residues 130-140 (ANPTGPIHLGG) carry the 'HIGH' region motif.

The protein belongs to the class-I aminoacyl-tRNA synthetase family. Monomer.

It localises to the cytoplasm. The enzyme catalyses tRNA(Arg) + L-arginine + ATP = L-arginyl-tRNA(Arg) + AMP + diphosphate. The polypeptide is Arginine--tRNA ligase (Rhodococcus erythropolis (strain PR4 / NBRC 100887)).